The primary structure comprises 263 residues: Probable adenylate kinase 7, mitochondrial (263 aa).

A mitochondrion-targeting transit peptide spans 1–30 (MAWLSRVRGVSPVTRLAAIRRSFGSAAALE). 72–77 (GAWRHV) provides a ligand contact to ATP. The NMP stretch occupies residues 92–121 (SMGSLVRQELNPRSSLYKEIASAVNERKLV). AMP is bound by residues Arg98, 119–121 (KLV), 149–152 (GIPR), Gln156, and Arg206. Residue Gly234 coordinates ATP.

Belongs to the adenylate kinase family. In terms of assembly, monomer.

The protein localises to the mitochondrion. It carries out the reaction AMP + ATP = 2 ADP. Functionally, catalyzes the reversible transfer of the terminal phosphate group between ATP and AMP. Plays an important role in cellular energy homeostasis and in adenine nucleotide metabolism. In Arabidopsis thaliana (Mouse-ear cress), this protein is Probable adenylate kinase 7, mitochondrial.